The primary structure comprises 427 residues: MKLRTNASGLSGTLKIPGDKSISHRSIMFGSLAKGITKIYGILRGEDVLSTMQAFRDLGVEIKDKDDFVEIHGRGFDGLKSPKKALDMGNSGTSIRLISGVLAGQDFTVEMFGDDSLSKRPMDRVTVPLRQMGVQILGRTERDLPPLTMKGSKRLKPIRYELPVASAQVKSALIFAALQASGESVIIEKEKTRNHTEDMIKQFGGHLDVDGKEIRISGGQEFTAQNVIVPGDISSAAFWLAAGLIVSNSKLTLKNVGINETRTGILEVIEAMGGKVELSDRDDLAKAATLTVESSNLKGTEIGGDIIPRLIDELPIIALLATQANGRTVIYDAQELKVKETDRIQVVADALNAMGAKITPTDDGMIIEGKTNLHGAKVNTFGDHRIGMMTAIAALLVKEGEVELERAEAINTSYPTFFSDLERITNG.

Residues lysine 20, serine 21, and arginine 25 each contribute to the 3-phosphoshikimate site. Lysine 20 contacts phosphoenolpyruvate. 2 residues coordinate phosphoenolpyruvate: glycine 92 and arginine 120. Residues serine 166, glutamine 168, aspartate 312, and lysine 339 each contribute to the 3-phosphoshikimate site. Glutamine 168 provides a ligand contact to phosphoenolpyruvate. The active-site Proton acceptor is aspartate 312. Phosphoenolpyruvate contacts are provided by arginine 343 and arginine 385.

Belongs to the EPSP synthase family. In terms of assembly, monomer.

The protein resides in the cytoplasm. It carries out the reaction 3-phosphoshikimate + phosphoenolpyruvate = 5-O-(1-carboxyvinyl)-3-phosphoshikimate + phosphate. It participates in metabolic intermediate biosynthesis; chorismate biosynthesis; chorismate from D-erythrose 4-phosphate and phosphoenolpyruvate: step 6/7. Catalyzes the transfer of the enolpyruvyl moiety of phosphoenolpyruvate (PEP) to the 5-hydroxyl of shikimate-3-phosphate (S3P) to produce enolpyruvyl shikimate-3-phosphate and inorganic phosphate. This chain is 3-phosphoshikimate 1-carboxyvinyltransferase, found in Streptococcus mutans serotype c (strain ATCC 700610 / UA159).